The chain runs to 164 residues: MRPRKRRIVDFEHSARQFRPFGPESEIPEEVLLTIDELEVMRLSFLENLSQGEAALRMEIHQSTFQRALKKALEKVTDALVHGKAIRIEGGDYRMPRGDGTGPAGQGPVGGGRSRGQGKGRGGRFGGPDGNCVCPACGYETPHTPGVSCSQVKCEKCGSSMVRK.

Residues 91–124 (GDYRMPRGDGTGPAGQGPVGGGRSRGQGKGRGGR) form a disordered region. The segment covering 99-115 (DGTGPAGQGPVGGGRSR) has biased composition (gly residues).

It belongs to the UPF0251 family.

The polypeptide is UPF0251 protein MA_0157 (Methanosarcina acetivorans (strain ATCC 35395 / DSM 2834 / JCM 12185 / C2A)).